Reading from the N-terminus, the 510-residue chain is MEMLNAIILILFPIIGFVLIFSFPTKTLKAKTASPSNPTSYQLIGSILSFNKNRHRLLQWYTDLLRLSPSQTITVDLLFGRRTIITANPENVEHILKTNFYNFPKGKPFTDLLGDLLGGGIFNSDGELWSSQRKLASHEFTMRSLREFTFEILREEVQNRLIPVLSSAVDCGETVDFQEVLKRFAFDVVCKVSLGWDPDCLDLTRPVPELVKAFDVAAEISARRATEPVYAVWKVKRFLNVGSEKRLREAIKTVHLSVSEIIRAKKKSLDIGGDVSDKQDLLSRFLAAGHGEEAVRDSVISFIMAGRDTTSAAMTWLFWLLSQNDDVETKILDELRNKGSLGLGFEDLREMSYTKACLCEAMRLYPPVAWDSKHAANDDILPDGTPLKKGDKVTYFPYGMGRMEKVWGKDWDEFKPNRWFEEEPSYGTKPVLKSVSSFKFPVFQAGPRVCIGKEMAFTQMKYVVGSVLSRFKIIPVCNNRPVFVPLLTAHMAGGLKVKIKRREQCDSMYI.

Residues 3-23 (MLNAIILILFPIIGFVLIFSF) form a helical membrane-spanning segment. C450 is a heme binding site.

It belongs to the cytochrome P450 family. Requires heme as cofactor.

The protein resides in the membrane. The catalysed reaction is a jasmonyl-L-amino acid + reduced [NADPH--hemoprotein reductase] + O2 = a 12-hydroxyjasmonyl-L-alpha-amino acid + oxidized [NADPH--hemoprotein reductase] + H2O + H(+). In terms of biological role, hydroxylase involved in the oxidation of the plant hormone jasmonoyl-L-isoleucine (JA-Ile), a bioactive phytohormone of the jasmonate-mediated signaling pathway. Converts JA-Ile to 12-hydroxy-JA-Ile. This is Cytochrome P450 94B1 from Arabidopsis thaliana (Mouse-ear cress).